Reading from the N-terminus, the 276-residue chain is Putative pyruvate, phosphate dikinase regulatory protein (276 aa).

150–157 (GVSRTSKT) contributes to the ADP binding site.

The protein belongs to the pyruvate, phosphate/water dikinase regulatory protein family. PDRP subfamily.

The enzyme catalyses N(tele)-phospho-L-histidyl/L-threonyl-[pyruvate, phosphate dikinase] + ADP = N(tele)-phospho-L-histidyl/O-phospho-L-threonyl-[pyruvate, phosphate dikinase] + AMP + H(+). It catalyses the reaction N(tele)-phospho-L-histidyl/O-phospho-L-threonyl-[pyruvate, phosphate dikinase] + phosphate + H(+) = N(tele)-phospho-L-histidyl/L-threonyl-[pyruvate, phosphate dikinase] + diphosphate. Bifunctional serine/threonine kinase and phosphorylase involved in the regulation of the pyruvate, phosphate dikinase (PPDK) by catalyzing its phosphorylation/dephosphorylation. This Lacticaseibacillus casei (strain BL23) (Lactobacillus casei) protein is Putative pyruvate, phosphate dikinase regulatory protein.